The chain runs to 312 residues: Olfactory receptor 10K2 (312 aa).

The Extracellular portion of the chain corresponds to 1-25 (MERVNETVVREVIFLGFSSLARLQQ). A glycan (N-linked (GlcNAc...) asparagine) is linked at Asn-5. A helical membrane pass occupies residues 26–46 (LLFVIFLLLYLFTLGTNAIII). Residues 47–54 (STIVLDRA) lie on the Cytoplasmic side of the membrane. Residues 55–75 (LHIPMYFFLAILSCSEICYTF) traverse the membrane as a helical segment. Residues 76-99 (IIVPKMLVDLLSQKKTISFLGCAI) lie on the Extracellular side of the membrane. Residues 100–120 (QMFSFLFLGCSHSFLLAVMGY) form a helical membrane-spanning segment. Topologically, residues 121–139 (DRYIAICNPLRYSVLMGHG) are cytoplasmic. A helical membrane pass occupies residues 140–160 (VCMGLVAAACACGFTVAQIIT). At 161 to 197 (SLVFHLPFYSSNQLHHFFCDIAPVLKLASHHNHFSQI) the chain is on the extracellular side. The helical transmembrane segment at 198-217 (VIFMLCTLVLAIPLLLILVS) threads the bilayer. Residues 218–237 (YVHILSAILQFPSTLGRCKA) lie on the Cytoplasmic side of the membrane. A helical membrane pass occupies residues 238–258 (FSTCVSHLIIVTVHYGCASFI). The Extracellular segment spans residues 259-271 (YLRPQSNYSSSQD). Asn-265 carries an N-linked (GlcNAc...) asparagine glycan. Residues 272-292 (ALISVSYTIITPLFNPMIYSL) traverse the membrane as a helical segment. Topologically, residues 293–312 (RNKEFKSALCKIVRRTISLL) are cytoplasmic.

This sequence belongs to the G-protein coupled receptor 1 family.

It localises to the cell membrane. Odorant receptor. The polypeptide is Olfactory receptor 10K2 (OR10K2) (Homo sapiens (Human)).